A 974-amino-acid polypeptide reads, in one-letter code: Membrane-associated phosphatidylinositol transfer protein 3 (974 aa).

A phosphoserine mark is found at S30, S31, S109, S295, S298, S321, S343, and S495. The segment at 310-347 (CSLASSKRLSKSNVDVSSGVEDEDPKRPLPRKQSDSST) is disordered. Positions 312-325 (LASSKRLSKSNVDV) are enriched in polar residues. Positions 390 to 594 (FDFDVSDFFL…VAFILRQVMR (205 aa)) constitute a DDHD domain. Residues 497–535 (PLLDAPASPPQAPRFQRTERRLSKGSSHSDSSESSDSLA) are disordered. Positions 520-533 (KGSSHSDSSESSDS) are enriched in low complexity. Phosphoserine occurs at positions 612, 907, 928, and 946. The disordered stretch occupies residues 927–974 (MSVQQPDPPAANPKPERAQSQPESDKDHERPLPALSWARGPPKFESVP).

The protein belongs to the PtdIns transfer protein family. PI transfer class IIA subfamily. As to quaternary structure, interacts with PTK2B via its C-terminus.

The protein resides in the endomembrane system. Functionally, catalyzes the transfer of phosphatidylinositol and phosphatidylcholine between membranes (in vitro). Binds calcium ions. In Mus musculus (Mouse), this protein is Membrane-associated phosphatidylinositol transfer protein 3 (Pitpnm3).